Consider the following 879-residue polypeptide: Alanine--tRNA ligase (879 aa).

Residues His-566, His-570, Cys-668, and His-672 each coordinate Zn(2+).

It belongs to the class-II aminoacyl-tRNA synthetase family. Zn(2+) serves as cofactor.

Its subcellular location is the cytoplasm. It carries out the reaction tRNA(Ala) + L-alanine + ATP = L-alanyl-tRNA(Ala) + AMP + diphosphate. Functionally, catalyzes the attachment of alanine to tRNA(Ala) in a two-step reaction: alanine is first activated by ATP to form Ala-AMP and then transferred to the acceptor end of tRNA(Ala). Also edits incorrectly charged Ser-tRNA(Ala) and Gly-tRNA(Ala) via its editing domain. This Listeria monocytogenes serovar 1/2a (strain ATCC BAA-679 / EGD-e) protein is Alanine--tRNA ligase.